The following is a 384-amino-acid chain: 1-deoxy-D-xylulose 5-phosphate reductoisomerase (384 aa).

NADPH-binding residues include threonine 10, glycine 11, serine 12, isoleucine 13, glycine 36, lysine 37, asparagine 38, and asparagine 121. Lysine 122 is a 1-deoxy-D-xylulose 5-phosphate binding site. An NADPH-binding site is contributed by glutamate 123. A Mn(2+)-binding site is contributed by aspartate 147. The 1-deoxy-D-xylulose 5-phosphate site is built by serine 148, glutamate 149, serine 173, and histidine 196. Position 149 (glutamate 149) interacts with Mn(2+). Glycine 202 is a binding site for NADPH. Residues serine 209, asparagine 214, lysine 215, and glutamate 218 each contribute to the 1-deoxy-D-xylulose 5-phosphate site. Glutamate 218 serves as a coordination point for Mn(2+).

Belongs to the DXR family. Mg(2+) serves as cofactor. Requires Mn(2+) as cofactor.

It carries out the reaction 2-C-methyl-D-erythritol 4-phosphate + NADP(+) = 1-deoxy-D-xylulose 5-phosphate + NADPH + H(+). The protein operates within isoprenoid biosynthesis; isopentenyl diphosphate biosynthesis via DXP pathway; isopentenyl diphosphate from 1-deoxy-D-xylulose 5-phosphate: step 1/6. Catalyzes the NADPH-dependent rearrangement and reduction of 1-deoxy-D-xylulose-5-phosphate (DXP) to 2-C-methyl-D-erythritol 4-phosphate (MEP). This is 1-deoxy-D-xylulose 5-phosphate reductoisomerase from Exiguobacterium sibiricum (strain DSM 17290 / CCUG 55495 / CIP 109462 / JCM 13490 / 255-15).